The primary structure comprises 312 residues: MNQKLKVAIIGSGNIGTDLMIKVLRNAKYLEMGAMVGIDAASDGLARAQRMGVTTTYAGVEGLIKLPEFADIDFVFDATSASAHVQNEALLRQAKPGIRLIDLTPAAIGPYCVPVVNLEEHLGKLNVNMVTCGGQATIPMVAAVSRVAKVHYAEIVASISSKSAGPGTRANIDEFTETTSKAIEVIGGAAKGKAIIIMNPAEPPLIMRDTVYVLSAAADQAAVAASVAEMVQAVQAYVPGYRLKQQVQFDVIPESAPLNIPGLGRFSGLKTSVFLEVEGAAHYLPAYAGNLDIMTSAALATAERMAQSMLNA.

Position 12-15 (12-15) interacts with NAD(+); the sequence is SGNI. C132 (acyl-thioester intermediate) is an active-site residue. NAD(+)-binding positions include 163-171 and N290; that span reads SAGPGTRAN.

The protein belongs to the acetaldehyde dehydrogenase family. In terms of assembly, heterotetramer composed of two DmpG (aldolase) and two DmpF (dehydrogenase) subunits, which allows a direct channeling of acetaldehyde between the two active sites.

It catalyses the reaction acetaldehyde + NAD(+) + CoA = acetyl-CoA + NADH + H(+). It participates in aromatic compound metabolism; phenol degradation. Is not activated by Mn(2+), Mg(2+), Ca(2+), Zn(2+) or Co(2+). In terms of biological role, catalyzes the conversion of acetaldehyde to acetyl-CoA, using NAD(+) and coenzyme A. Can also act on propanal and butanal to form propanoyl-CoA and butanoyl-CoA, respectively. Is the final enzyme in the meta-cleavage pathway for the degradation of aromatic compounds such as phenols, cresols and catechols. NADP(+) can replace NAD(+) but the rate of reaction is much slower. This is Acetaldehyde dehydrogenase (dmpF) from Pseudomonas sp. (strain CF600).